The primary structure comprises 116 residues: Somatostatin (116 aa).

The N-terminal stretch at 1-24 (MLSCRLQCALAALSIVLALGGVTC) is a signal peptide. The propeptide occupies 25 to 88 (APSDPRLRQF…QDEMRLELQR (64 aa)). The residue at position 43 (A43) is an Alanine amide. Residues 62–99 (QTENDALEPEDLSQAAEQDEMRLELQRSANSNPAMAPR) are disordered. Cysteines 105 and 116 form a disulfide.

The protein belongs to the somatostatin family. C-terminal amidation of the neuronostatin peptide is required for its biological activity, including for the regulation of mean arterial pressure.

It localises to the secreted. Inhibits the secretion of pituitary hormones, including that of growth hormone/somatotropin (GH1), PRL, ACTH, luteinizing hormone (LH) and TSH. Also impairs ghrelin- and GnRH-stimulated secretion of GH1 and LH; the inhibition of ghrelin-stimulated secretion of GH1 can be further increased by neuronostatin. Its function is as follows. May enhance low-glucose-induced glucagon release by pancreatic alpha cells. This effect may be mediated by binding to GPR107 and PKA activation. May regulate cardiac contractile function. May compromise cardiomyocyte viability. In the central nervous system, may impair memory retention and may affect hippocampal excitability. May also have anxiolytic and anorexigenic effects. May play a role in arterial pressure regulation. May inhibit basal, but not ghrelin- or GnRH-stimulated secretion of GH1 or LH, but does not affect the release of other pituitary hormones, including PRL, ACTH, FSH or TSH. Potentiates inhibitory action of somatostatin on ghrelin-stimulated secretion of GH1, but not that on GnRH-stimulated secretion of LH. The chain is Somatostatin (SST) from Canis lupus familiaris (Dog).